Here is a 302-residue protein sequence, read N- to C-terminus: 4-hydroxy-tetrahydrodipicolinate synthase (302 aa).

Thr-57 serves as a coordination point for pyruvate. Tyr-145 acts as the Proton donor/acceptor in catalysis. The active-site Schiff-base intermediate with substrate is Lys-173. Position 213 (Ile-213) interacts with pyruvate.

It belongs to the DapA family. As to quaternary structure, homotetramer; dimer of dimers.

It localises to the cytoplasm. The enzyme catalyses L-aspartate 4-semialdehyde + pyruvate = (2S,4S)-4-hydroxy-2,3,4,5-tetrahydrodipicolinate + H2O + H(+). Its pathway is amino-acid biosynthesis; L-lysine biosynthesis via DAP pathway; (S)-tetrahydrodipicolinate from L-aspartate: step 3/4. Functionally, catalyzes the condensation of (S)-aspartate-beta-semialdehyde [(S)-ASA] and pyruvate to 4-hydroxy-tetrahydrodipicolinate (HTPA). This chain is 4-hydroxy-tetrahydrodipicolinate synthase, found in Corynebacterium aurimucosum (strain ATCC 700975 / DSM 44827 / CIP 107346 / CN-1) (Corynebacterium nigricans).